The following is a 65-amino-acid chain: Ferredoxin-1 (65 aa).

The 29-residue stretch at 3-31 (RKFYVDQDECIACESCVEIAPGAFAMDPE) folds into the 4Fe-4S ferredoxin-type domain. Residues cysteine 12, cysteine 15, cysteine 18, and cysteine 55 each coordinate [4Fe-4S] cluster.

As to quaternary structure, homodimer. It depends on [4Fe-4S] cluster as a cofactor.

Its function is as follows. Ferredoxins are iron-sulfur proteins that transfer electrons in a wide variety of metabolic reactions. In Desulfocurvibacter africanus (Desulfovibrio africanus), this protein is Ferredoxin-1 (fd1).